We begin with the raw amino-acid sequence, 268 residues long: ClpXP adapter protein SpxH (268 aa).

Belongs to the SpxH family. In terms of assembly, interacts with Spx.

The protein localises to the cytoplasm. Functionally, adapter protein required for efficient degradation of Spx by ClpXP under non-stress conditions. Interaction with Spx stabilizes Spx and exposes the C-terminus of Spx for recognition and proteolysis by ClpXP. The protein is ClpXP adapter protein SpxH of Staphylococcus aureus (strain MRSA252).